Consider the following 261-residue polypeptide: CD40 ligand (261 aa).

Residues Met-1 to Lys-22 lie on the Cytoplasmic side of the membrane. A helical; Signal-anchor for type II membrane protein membrane pass occupies residues Ile-23–Leu-46. The Extracellular segment spans residues His-47 to Leu-261. Residues Ile-122–Leu-261 enclose the THD domain. Cys-178 and Cys-218 are joined by a disulfide. A glycan (N-linked (GlcNAc...) asparagine) is linked at Asn-240.

This sequence belongs to the tumor necrosis factor family. Homotrimer. Interacts with CD28. CD40 ligand, soluble form: Exists as either a monomer or a homotrimer. Forms a ternary complex between CD40 and integrins for CD40-CD40LG signaling. The soluble form derives from the membrane form by proteolytic processing.

Its subcellular location is the cell membrane. The protein resides in the cell surface. It is found in the secreted. Cytokine that acts as a ligand to CD40/TNFRSF5. Costimulates T-cell proliferation and cytokine production. Its cross-linking on T-cells generates a costimulatory signal which enhances the production of IL4 and IL10 in conjunction with the TCR/CD3 ligation and CD28 costimulation. Induces the activation of NF-kappa-B. Induces the activation of kinases MAPK8 and PAK2 in T-cells. Mediates B-cell proliferation in the absence of co-stimulus as well as IgE production in the presence of IL4. Involved in immunoglobulin class switching. Functionally, acts as a ligand for integrins, specifically ITGA5:ITGB1 and ITGAV:ITGB3; both integrins and the CD40 receptor are required for activation of CD40-CD40LG signaling, which have cell-type dependent effects, such as B-cell activation, NF-kappa-B signaling and anti-apoptotic signaling. The chain is CD40 ligand (CD40LG) from Bos taurus (Bovine).